The following is a 445-amino-acid chain: 6-phosphogluconate dehydrogenase, decarboxylating (445 aa).

Residues 1–4 (AVMG), 22–24 (NRS), 63–65 (VKA), and Asn91 each bind NADP(+). Substrate contacts are provided by residues Asn91 and 117–119 (SGG). Lys172 functions as the Proton acceptor in the catalytic mechanism. 175–176 (HN) serves as a coordination point for substrate. Glu179 functions as the Proton donor in the catalytic mechanism. Residues Tyr180, Lys249, Arg276, Arg434, and His440 each coordinate substrate.

It belongs to the 6-phosphogluconate dehydrogenase family. Homodimer.

It carries out the reaction 6-phospho-D-gluconate + NADP(+) = D-ribulose 5-phosphate + CO2 + NADPH. It functions in the pathway carbohydrate degradation; pentose phosphate pathway; D-ribulose 5-phosphate from D-glucose 6-phosphate (oxidative stage): step 3/3. Catalyzes the oxidative decarboxylation of 6-phosphogluconate to ribulose 5-phosphate and CO(2), with concomitant reduction of NADP to NADPH. The polypeptide is 6-phosphogluconate dehydrogenase, decarboxylating (gnd) (Raoultella planticola (Klebsiella planticola)).